Consider the following 356-residue polypeptide: MAEWANAAFAARRRGDETTRDNAFSYTNSNNTRDPFEGPNYHIAPRWVYNVATVWMFFVVVASTFTNGLVLVATAKFKKLRHPLNWILVNLAIADLGETLFASTISVINQVFGYFILGHPMCIFEGYTVSVCGIAGLWSLTVISWERWVVVCKPFGNVKFDGKWASAGIIFSWVWAAVWCAPPIFGWSRYWPHGLKTSCGPDVFGGNEDPGVQSYMLVLMITCCILPLAIIILCYIAVFLAIHAVAQQQKDSESTQKAEKEVSRMVVVMILAFCLCWGPYTAFACFAAANPGYAFHPLAAAMPAYFAKSATIYNPIIYVFMNRQFRVCIMQLFGKKVDDGSEVSTSKTEVSSVAPA.

Topologically, residues 1 to 48 (MAEWANAAFAARRRGDETTRDNAFSYTNSNNTRDPFEGPNYHIAPRWV) are extracellular. A glycan (N-linked (GlcNAc...) asparagine) is linked at Asn-30. The helical transmembrane segment at 49–73 (YNVATVWMFFVVVASTFTNGLVLVA) threads the bilayer. Residues 74–85 (TAKFKKLRHPLN) lie on the Cytoplasmic side of the membrane. Residues 86-111 (WILVNLAIADLGETLFASTISVINQV) traverse the membrane as a helical segment. The Extracellular segment spans residues 112–125 (FGYFILGHPMCIFE). A disulfide bridge links Cys-122 with Cys-199. Residues 126 to 145 (GYTVSVCGIAGLWSLTVISW) traverse the membrane as a helical segment. Over 146-164 (ERWVVVCKPFGNVKFDGKW) the chain is Cytoplasmic. Residues 165–188 (ASAGIIFSWVWAAVWCAPPIFGWS) form a helical membrane-spanning segment. The Extracellular segment spans residues 189 to 214 (RYWPHGLKTSCGPDVFGGNEDPGVQS). The helical transmembrane segment at 215 to 242 (YMLVLMITCCILPLAIIILCYIAVFLAI) threads the bilayer. The Cytoplasmic portion of the chain corresponds to 243–264 (HAVAQQQKDSESTQKAEKEVSR). A helical transmembrane segment spans residues 265–288 (MVVVMILAFCLCWGPYTAFACFAA). The Extracellular portion of the chain corresponds to 289 to 296 (ANPGYAFH). Residues 297 to 321 (PLAAAMPAYFAKSATIYNPIIYVFM) traverse the membrane as a helical segment. An N6-(retinylidene)lysine modification is found at Lys-308. Residues 322–356 (NRQFRVCIMQLFGKKVDDGSEVSTSKTEVSSVAPA) are Cytoplasmic-facing.

This sequence belongs to the G-protein coupled receptor 1 family. Opsin subfamily. Post-translationally, phosphorylated on some or all of the serine and threonine residues present in the C-terminal region.

It localises to the membrane. In terms of biological role, visual pigments are the light-absorbing molecules that mediate vision. They consist of an apoprotein, opsin, covalently linked to cis-retinal. This chain is Red-sensitive opsin-2 (opn1lw2), found in Danio rerio (Zebrafish).